We begin with the raw amino-acid sequence, 280 residues long: Pre-mRNA-splicing factor PRP21 (280 aa).

One copy of the SURP motif 1 repeat lies at 11–49 (DIKTTVNYIKQHGVEFENKLLEDERFSFIKKDDPLHEYY). Residues 53–72 (MNEPTDTVSGEDNDRKSERE) are disordered. The stretch at 95-135 (VIKLTARYYAKDKSIVEQMISKDGEARLNFMNSSHPLHKTF) is one SURP motif 2 repeat. Basic and acidic residues-rich tracts occupy residues 246 to 261 (EKIV…GDSK) and 269 to 280 (AVGETRLKKSKK). The tract at residues 246–280 (EKIVSDQGKQKGGDSKGKKRKIRAVGETRLKKSKK) is disordered.

As to quaternary structure, belongs to the CWC complex (or CEF1-associated complex), a spliceosome sub-complex reminiscent of a late-stage spliceosome composed of the U2, U5 and U6 snRNAs and at least BUD13, BUD31, BRR2, CDC40, CEF1, CLF1, CUS1, CWC2, CWC15, CWC21, CWC22, CWC23, CWC24, CWC25, CWC27, ECM2, HSH155, IST3, ISY1, LEA1, MSL1, NTC20, PRP8, PRP9, PRP11, PRP19, PRP21, PRP22, PRP45, PRP46, SLU7, SMB1, SMD1, SMD2, SMD3, SMX2, SMX3, SNT309, SNU114, SPP2, SYF1, SYF2, RSE1 and YJU2.

The protein localises to the nucleus. Its function is as follows. mRNA splicing factors, PRP9, PRP11, and PRP21, are necessary for binding of the U2 snRNP to the pre-mRNA in an early step of spliceosome assembly. This is Pre-mRNA-splicing factor PRP21 (PRP21) from Saccharomyces cerevisiae (strain ATCC 204508 / S288c) (Baker's yeast).